The primary structure comprises 426 residues: MNILLQDPFAVLKEHPEKLTHTIENPLRTECLQFSPCGDYLALGCANGALVIYDMDTFRPICVPGNMLGAHVRPITSIAWSPDGRLLLTSSRDWSIKLWDLSKPSKPLKEIRFDSPIWGCQWLDAKRRLCVATIFEESDAYVIDFSNDPVASLLSKSDEKQLSSTPDHGYVLVCTVHTKHPNIIIVGTSKGWLDFYKFHSLYQTECIHSLKITSSNIKHLIVSQNGERLAINCSDRTIRQYEISIDDENSAVELTLEHKYQDVINKLQWNCILFSNNTAEYLVASTHGSSAHELYIWETTSGTLVRVLEGAEEELIDINWDFYSMSIVSNGFESGNVYVWSVVIPPKWSALAPDFEEVEENVDYLEKEDEFDEVDEAEQQQGLEQEEEIAIDLRTREQYDVRGNNLLVERFTIPTDYTRIIKMQSS.

WD repeat units follow at residues 24 to 63, 70 to 109, 212 to 251, 264 to 307, and 310 to 350; these read ENPLRTECLQFSPCGDYLALGCANGALVIYDMDTFRPICV, AHVRPITSIAWSPDGRLLLTSSRDWSIKLWDLSKPSKPLK, ITSSNIKHLIVSQNGERLAINCSDRTIRQYEISIDDENSA, INKL…LVRV, and GAEE…KWSA. The DNA site is built by Arg-236 and Lys-266.

Component of the Set1C/COMPASS complex which consists of SET1(2), BRE2(2), SPP1(2), SDC1(1), SHG1(1), SWD1(1), SWD2(1), and SWD3(1).

The protein localises to the nucleus. It is found in the chromosome. It localises to the telomere. In terms of biological role, component of the Set1C/COMPASS complex that specifically mono-, di- and trimethylates histone H3 to form H3K4me1/2/3, which subsequently plays a role in telomere length maintenance and transcription elongation regulation. COMPASS recognizes ubiquitinated H2B on one face of the nucleosome which stimulates the methylation of H3 on the opposing face. SWD1/CPS50 acts as an assembly and regulatory hub for COMPASS complex formation. Serves as a highly utilized surface for COMPASS interaction with the nucleosome. The protein is COMPASS component SWD1 of Saccharomyces cerevisiae (strain ATCC 204508 / S288c) (Baker's yeast).